The following is a 497-amino-acid chain: Glycerol kinase (497 aa).

T11 serves as a coordination point for ADP. Residues T11, T12, and S13 each contribute to the ATP site. T11 contributes to the sn-glycerol 3-phosphate binding site. Residue R15 coordinates ADP. 4 residues coordinate sn-glycerol 3-phosphate: R81, E82, Y133, and D242. Glycerol-binding residues include R81, E82, Y133, D242, and Q243. ADP contacts are provided by T264 and G306. ATP contacts are provided by T264, G306, Q310, and G407. ADP is bound by residues G407 and N411.

Belongs to the FGGY kinase family.

It catalyses the reaction glycerol + ATP = sn-glycerol 3-phosphate + ADP + H(+). It participates in polyol metabolism; glycerol degradation via glycerol kinase pathway; sn-glycerol 3-phosphate from glycerol: step 1/1. Inhibited by fructose 1,6-bisphosphate (FBP). Functionally, key enzyme in the regulation of glycerol uptake and metabolism. Catalyzes the phosphorylation of glycerol to yield sn-glycerol 3-phosphate. This chain is Glycerol kinase, found in Alcanivorax borkumensis (strain ATCC 700651 / DSM 11573 / NCIMB 13689 / SK2).